The chain runs to 973 residues: UvrABC system protein A (973 aa).

G34–S41 serves as a coordination point for ATP. 2 ABC transporter domains span residues W331 to L609 and P629 to K958. G662–S669 provides a ligand contact to ATP. The C4-type zinc finger occupies C761–C787.

This sequence belongs to the ABC transporter superfamily. UvrA family. Forms a heterotetramer with UvrB during the search for lesions.

Its subcellular location is the cytoplasm. Its function is as follows. The UvrABC repair system catalyzes the recognition and processing of DNA lesions. UvrA is an ATPase and a DNA-binding protein. A damage recognition complex composed of 2 UvrA and 2 UvrB subunits scans DNA for abnormalities. When the presence of a lesion has been verified by UvrB, the UvrA molecules dissociate. In Agrobacterium fabrum (strain C58 / ATCC 33970) (Agrobacterium tumefaciens (strain C58)), this protein is UvrABC system protein A.